The primary structure comprises 313 residues: Ribose-phosphate pyrophosphokinase (313 aa).

ATP-binding positions include 40-42 (DGE) and 98-99 (RQ). His-132 and Asp-172 together coordinate Mg(2+). Lys-195 is a catalytic residue. D-ribose 5-phosphate is bound by residues Arg-197, Asp-221, and 225–229 (DTAGT).

The protein belongs to the ribose-phosphate pyrophosphokinase family. Class I subfamily. Homohexamer. It depends on Mg(2+) as a cofactor.

The protein localises to the cytoplasm. The catalysed reaction is D-ribose 5-phosphate + ATP = 5-phospho-alpha-D-ribose 1-diphosphate + AMP + H(+). The protein operates within metabolic intermediate biosynthesis; 5-phospho-alpha-D-ribose 1-diphosphate biosynthesis; 5-phospho-alpha-D-ribose 1-diphosphate from D-ribose 5-phosphate (route I): step 1/1. Its function is as follows. Involved in the biosynthesis of the central metabolite phospho-alpha-D-ribosyl-1-pyrophosphate (PRPP) via the transfer of pyrophosphoryl group from ATP to 1-hydroxyl of ribose-5-phosphate (Rib-5-P). The chain is Ribose-phosphate pyrophosphokinase from Porphyromonas gingivalis (strain ATCC BAA-308 / W83).